The chain runs to 277 residues: Shikimate dehydrogenase (NADP(+)) (277 aa).

Shikimate contacts are provided by residues 15-17 and threonine 62; that span reads SLS. Lysine 66 (proton acceptor) is an active-site residue. Asparagine 87 and aspartate 102 together coordinate shikimate. Residues 127 to 131, 151 to 156, and isoleucine 219 contribute to the NADP(+) site; these read GAGGA and NRTVDK. Tyrosine 221 contacts shikimate. Glycine 242 serves as a coordination point for NADP(+).

This sequence belongs to the shikimate dehydrogenase family. In terms of assembly, homodimer.

It catalyses the reaction shikimate + NADP(+) = 3-dehydroshikimate + NADPH + H(+). Its pathway is metabolic intermediate biosynthesis; chorismate biosynthesis; chorismate from D-erythrose 4-phosphate and phosphoenolpyruvate: step 4/7. Functionally, involved in the biosynthesis of the chorismate, which leads to the biosynthesis of aromatic amino acids. Catalyzes the reversible NADPH linked reduction of 3-dehydroshikimate (DHSA) to yield shikimate (SA). In Bacillus thuringiensis subsp. konkukian (strain 97-27), this protein is Shikimate dehydrogenase (NADP(+)).